A 63-amino-acid chain; its full sequence is ATP synthase subunit epsilon, mitochondrial (63 aa).

In terms of assembly, F-type ATP synthases have 2 components, the catalytic core F(1) and the membrane-embedded component F(0), linked together by a central stalk and a peripheral stalk. The central stalk, also called rotor shaft, is often seen as part of F(1). The peripheral stalk is seen as part of F(0). F(0) contains the membrane channel next to the rotor. F-type ATP synthases form dimers but each monomer functions independently in ATP generation. The dimer consists of 18 different polypeptides: ATP1 (subunit alpha, part of F(1), 3 molecules per monomer), ATP2 (subunit beta, part of F(1), 3 molecules per monomer), ATP3 (subunit gamma, part of the central stalk), ATP4 (subunit b, part of the peripheral stalk), ATP5/OSCP (subunit 5/OSCP, part of the peripheral stalk), ATP6 (subunit a, part of the peripheral stalk), ATP7 (subunit d, part of the peripheral stalk), ATP8 (subunit 8, part of the peripheral stalk), OLI1 (subunit c, part of the rotor, 10 molecules per monomer), ATP14 (subunit h, part of the peripheral stalk), ATP15 (subunit epsilon, part of the central stalk), ATP16 (subunit delta, part of the central stalk), ATP17 (subunit f, part of the peripheral stalk), ATP18 (subunit i/j, part of the peripheral stalk). Dimer-specific subunits are ATP19 (subunit k, at interface between monomers), ATP20 (subunit g, at interface between monomers), TIM11 (subunit e, at interface between monomers). Also contains subunit L.

The protein resides in the mitochondrion inner membrane. In terms of biological role, mitochondrial membrane ATP synthase (F(1)F(0) ATP synthase or Complex V) produces ATP from ADP in the presence of a proton gradient across the membrane which is generated by electron transport complexes of the respiratory chain. F-type ATP synthases consist of two structural domains, F(1) - containing the extramembraneous catalytic core, and F(0) - containing the membrane proton channel, linked together by a central stalk and a peripheral stalk. During catalysis, ATP synthesis in the catalytic domain of F(1) is coupled via a rotary mechanism of the central stalk subunits to proton translocation. Part of the complex F(1) domain and the central stalk which is part of the complex rotary element. Rotation of the central stalk against the surrounding alpha/ATP1(3)beta/ATP2(3) subunits leads to hydrolysis of ATP in three separate catalytic sites on the beta/ATP2 subunits. In Pichia angusta (Yeast), this protein is ATP synthase subunit epsilon, mitochondrial.